Reading from the N-terminus, the 294-residue chain is Protease HtpX homolog (294 aa).

Transmembrane regions (helical) follow at residues 12–32 (VLFGGIWGVLLLIGAFLASSF) and 34–54 (SPGVLLVFVVIGLATSAYSYW). Histidine 138 contributes to the Zn(2+) binding site. Glutamate 139 is a catalytic residue. Histidine 142 contacts Zn(2+). The next 2 membrane-spanning stretches (helical) occupy residues 152 to 172 (SVAGALAGVITSIAQFGVFFG) and 188 to 208 (LALLLLSLMAPLAASVIQLAI). Glutamate 213 lines the Zn(2+) pocket.

This sequence belongs to the peptidase M48B family. Zn(2+) is required as a cofactor.

The protein localises to the cell membrane. In Kineococcus radiotolerans (strain ATCC BAA-149 / DSM 14245 / SRS30216), this protein is Protease HtpX homolog.